Consider the following 27-residue polypeptide: Palustrin-1d (27 aa).

Cysteines 21 and 27 form a disulfide.

Expressed by the skin glands.

The protein localises to the secreted. Its function is as follows. Antimicrobial activity against Gram-negative bacterium E.coli. The polypeptide is Palustrin-1d (Lithobates palustris (Pickerel frog)).